Consider the following 709-residue polypeptide: Elongation factor G (709 aa).

A tr-type G domain is found at 9–295; that stretch reads AKVRNIGIMA…AVVRYLPTPL (287 aa). GTP is bound by residues 18–25, 86–90, and 140–143; these read AHIDAGKT, DTPGH, and NKLD.

This sequence belongs to the TRAFAC class translation factor GTPase superfamily. Classic translation factor GTPase family. EF-G/EF-2 subfamily.

The protein localises to the cytoplasm. Catalyzes the GTP-dependent ribosomal translocation step during translation elongation. During this step, the ribosome changes from the pre-translocational (PRE) to the post-translocational (POST) state as the newly formed A-site-bound peptidyl-tRNA and P-site-bound deacylated tRNA move to the P and E sites, respectively. Catalyzes the coordinated movement of the two tRNA molecules, the mRNA and conformational changes in the ribosome. This Streptomyces avermitilis (strain ATCC 31267 / DSM 46492 / JCM 5070 / NBRC 14893 / NCIMB 12804 / NRRL 8165 / MA-4680) protein is Elongation factor G.